The primary structure comprises 313 residues: Probable cell division protein WhiA (313 aa).

A DNA-binding region (H-T-H motif) is located at residues 274-308 (SLKELGELVPGGPISKSGVNHRLRKLNAYADELRA).

The protein belongs to the WhiA family.

Its function is as follows. Involved in cell division and chromosome segregation. This is Probable cell division protein WhiA from Limosilactobacillus reuteri subsp. reuteri (strain JCM 1112) (Lactobacillus reuteri).